Consider the following 207-residue polypeptide: 8-oxoguanine DNA glycosylase/AP lyase (207 aa).

Catalysis depends on residues K128 and D146.

It belongs to the type-2 OGG1 family.

The enzyme catalyses 2'-deoxyribonucleotide-(2'-deoxyribose 5'-phosphate)-2'-deoxyribonucleotide-DNA = a 3'-end 2'-deoxyribonucleotide-(2,3-dehydro-2,3-deoxyribose 5'-phosphate)-DNA + a 5'-end 5'-phospho-2'-deoxyribonucleoside-DNA + H(+). In terms of biological role, catalyzes the excision of an oxidatively damaged form of guanine (7,8-dihydro-8-oxoguanine = 8-oxoG) from DNA. Also cleaves the DNA backbone at apurinic/apyrimidinic sites (AP sites). This is 8-oxoguanine DNA glycosylase/AP lyase from Saccharolobus islandicus (strain Y.N.15.51 / Yellowstone #2) (Sulfolobus islandicus).